The following is a 333-amino-acid chain: Transcription initiation factor IIB (333 aa).

The TFIIB-type zinc finger occupies glutamate 33–glutamine 64. 4 residues coordinate Zn(2+): cysteine 37, cysteine 40, cysteine 56, and cysteine 59. Repeat copies occupy residues glutamine 149–leucine 232 and leucine 243–lysine 324.

The protein belongs to the TFIIB family.

In terms of biological role, stabilizes TBP binding to an archaeal box-A promoter. Also responsible for recruiting RNA polymerase II to the pre-initiation complex (DNA-TBP-TFIIB). This is Transcription initiation factor IIB from Pyrobaculum neutrophilum (strain DSM 2338 / JCM 9278 / NBRC 100436 / V24Sta) (Thermoproteus neutrophilus).